Here is a 489-residue protein sequence, read N- to C-terminus: Betaine aldehyde dehydrogenase (489 aa).

Thr-26 and Asp-93 together coordinate K(+). Gly-150–Trp-152 lines the NAD(+) pocket. Lys-162 functions as the Charge relay system in the catalytic mechanism. Lys-176–Glu-179 contacts NAD(+). K(+) is bound at residue Val-180. Gly-229–Thr-232 lines the NAD(+) pocket. Position 245 (Leu-245) interacts with K(+). Glu-251 (proton acceptor) is an active-site residue. 3 residues coordinate NAD(+): Gly-253, Cys-285, and Glu-386. Residue Cys-285 is the Nucleophile of the active site. The residue at position 285 (Cys-285) is a Cysteine sulfenic acid (-SOH). Residues Lys-456 and Gly-459 each coordinate K(+). Glu-463 serves as the catalytic Charge relay system.

Belongs to the aldehyde dehydrogenase family. In terms of assembly, dimer of dimers. K(+) serves as cofactor.

It catalyses the reaction betaine aldehyde + NAD(+) + H2O = glycine betaine + NADH + 2 H(+). It functions in the pathway amine and polyamine biosynthesis; betaine biosynthesis via choline pathway; betaine from betaine aldehyde: step 1/1. Functionally, involved in the biosynthesis of the osmoprotectant glycine betaine. Catalyzes the irreversible oxidation of betaine aldehyde to the corresponding acid. This chain is Betaine aldehyde dehydrogenase, found in Burkholderia lata (strain ATCC 17760 / DSM 23089 / LMG 22485 / NCIMB 9086 / R18194 / 383).